Consider the following 1197-residue polypeptide: DExH-box ATP-dependent RNA helicase DExH3 (1197 aa).

Positions 309–476 (LKAIAANQVV…FGGAPAMHIP (168 aa)) constitute a Helicase ATP-binding domain. Residue 322 to 329 (GETGCGKT) participates in ATP binding. The DEIH box motif lies at 423–426 (DEIH). Residues 564 to 738 (LIENVLCHIV…SLCLQIKSLG (175 aa)) form the Helicase C-terminal domain.

It belongs to the DExH box helicase family.

The enzyme catalyses ATP + H2O = ADP + phosphate + H(+). The protein is DExH-box ATP-dependent RNA helicase DExH3 of Arabidopsis thaliana (Mouse-ear cress).